Reading from the N-terminus, the 281-residue chain is Bifunctional protein FolD (281 aa).

NADP(+) is bound by residues 161 to 163 (GRS), serine 186, and isoleucine 227.

The protein belongs to the tetrahydrofolate dehydrogenase/cyclohydrolase family. In terms of assembly, homodimer.

The enzyme catalyses (6R)-5,10-methylene-5,6,7,8-tetrahydrofolate + NADP(+) = (6R)-5,10-methenyltetrahydrofolate + NADPH. It catalyses the reaction (6R)-5,10-methenyltetrahydrofolate + H2O = (6R)-10-formyltetrahydrofolate + H(+). It functions in the pathway one-carbon metabolism; tetrahydrofolate interconversion. Functionally, catalyzes the oxidation of 5,10-methylenetetrahydrofolate to 5,10-methenyltetrahydrofolate and then the hydrolysis of 5,10-methenyltetrahydrofolate to 10-formyltetrahydrofolate. This chain is Bifunctional protein FolD, found in Brachyspira hyodysenteriae (strain ATCC 49526 / WA1).